Reading from the N-terminus, the 594-residue chain is Proteasome-associated ATPase (594 aa).

The stretch at 20-98 (DDLAAQVTYL…KEEIDRLAQP (79 aa)) forms a coiled coil. ATP is bound at residue 282–287 (GCGKTL). The docks into pockets in the proteasome alpha-ring stretch occupies residues 593-594 (YL).

The protein belongs to the AAA ATPase family. As to quaternary structure, homohexamer. Assembles into a hexameric ring structure that caps the 20S proteasome core. Strongly interacts with the prokaryotic ubiquitin-like protein Pup through a hydrophobic interface; the interacting region of ARC lies in its N-terminal coiled-coil domain. There is one Pup binding site per ARC hexamer ring. Upon ATP-binding, the C-terminus of ARC interacts with the alpha-rings of the proteasome core, possibly by binding to the intersubunit pockets.

It functions in the pathway protein degradation; proteasomal Pup-dependent pathway. Functionally, ATPase which is responsible for recognizing, binding, unfolding and translocation of pupylated proteins into the bacterial 20S proteasome core particle. May be essential for opening the gate of the 20S proteasome via an interaction with its C-terminus, thereby allowing substrate entry and access to the site of proteolysis. Thus, the C-termini of the proteasomal ATPase may function like a 'key in a lock' to induce gate opening and therefore regulate proteolysis. The sequence is that of Proteasome-associated ATPase from Catenulispora acidiphila (strain DSM 44928 / JCM 14897 / NBRC 102108 / NRRL B-24433 / ID139908).